Reading from the N-terminus, the 357-residue chain is Uroporphyrinogen decarboxylase (357 aa).

Residues 30–34 (RQAGR), Asp-79, Tyr-154, Ser-209, and His-336 each bind substrate.

Belongs to the uroporphyrinogen decarboxylase family. Homodimer.

The protein localises to the cytoplasm. The catalysed reaction is uroporphyrinogen III + 4 H(+) = coproporphyrinogen III + 4 CO2. The protein operates within porphyrin-containing compound metabolism; protoporphyrin-IX biosynthesis; coproporphyrinogen-III from 5-aminolevulinate: step 4/4. Functionally, catalyzes the decarboxylation of four acetate groups of uroporphyrinogen-III to yield coproporphyrinogen-III. The polypeptide is Uroporphyrinogen decarboxylase (Mycobacterium bovis (strain ATCC BAA-935 / AF2122/97)).